The following is a 250-amino-acid chain: 2,3-bisphosphoglycerate-dependent phosphoglycerate mutase (250 aa).

Residues 8-15 (RHGESTWN), 21-22 (TG), Arg60, 87-90 (ERHY), Lys98, and 114-115 (RR) each bind substrate. His9 serves as the catalytic Tele-phosphohistidine intermediate. Glu87 serves as the catalytic Proton donor/acceptor. The disordered stretch occupies residues 116–135 (SYDTPPPPLAANDPRSERSD). 183–184 (GN) lines the substrate pocket.

This sequence belongs to the phosphoglycerate mutase family. BPG-dependent PGAM subfamily. As to quaternary structure, homodimer.

It carries out the reaction (2R)-2-phosphoglycerate = (2R)-3-phosphoglycerate. It participates in carbohydrate degradation; glycolysis; pyruvate from D-glyceraldehyde 3-phosphate: step 3/5. In terms of biological role, catalyzes the interconversion of 2-phosphoglycerate and 3-phosphoglycerate. The protein is 2,3-bisphosphoglycerate-dependent phosphoglycerate mutase of Polaromonas naphthalenivorans (strain CJ2).